Reading from the N-terminus, the 109-residue chain is Nucleoid-associated protein VIBHAR_03086 (109 aa).

Disordered regions lie at residues 1 to 21 (MFGK…QDRM) and 88 to 109 (QKEK…KMPF).

This sequence belongs to the YbaB/EbfC family. Homodimer.

Its subcellular location is the cytoplasm. The protein localises to the nucleoid. Functionally, binds to DNA and alters its conformation. May be involved in regulation of gene expression, nucleoid organization and DNA protection. The protein is Nucleoid-associated protein VIBHAR_03086 of Vibrio campbellii (strain ATCC BAA-1116).